The following is a 341-amino-acid chain: MLTLHLQDDDVAAIDAVADELSRRYDSVESTEFQAESRLYADELPRRVRRALHEYRSTEKSGILVVTGLPVDDSALGATPADRRHKPVPSTSLRQDIAFYLIANLLGDPIGWATQQDGFIMHDVYPVQGFEHEQIGWGSEETLTWHTEDAFHPLRTDYLGLMCLRNPDGVETTACDIADVEIDDETRETLSQERFRILPDDAHRIHGKAPGDESARESALRERSRQRVASALESPDPVAVLFGDRDDPYLRIDPHYMQGVQGETEQRALETIGAAIDDAMSGVVLSPGDIVFIDNYRVVHGRKPFRARFDGTDRWLRRLNIARDLRKSREARLAATTRVIY.

The Fe cation site is built by histidine 146 and glutamate 148. Residues 203–223 (HRIHGKAPGDESARESALRER) form a disordered region. A Fe cation-binding site is contributed by histidine 300.

The protein belongs to the clavaminate synthase family. Requires Fe(2+) as cofactor.

It catalyses the reaction L-enduracididine + 2-oxoglutarate + O2 = (3S)-3-hydroxy-L-enduracididine + succinate + CO2. Its pathway is antibiotic biosynthesis. In terms of biological role, hydroxylates the beta carbon of free L-enduracididine to produce (3S)-3-hydroxy-L-enduracididine in biosynthesis of the nonproteinogenic amino acid beta-hydroxyenduracididine, a component of antibiotic mannopeptimycin. The sequence is that of Enduracididine beta-hydroxylase (mppO) from Streptomyces hygroscopicus.